A 431-amino-acid chain; its full sequence is Serine hydroxymethyltransferase (431 aa).

(6S)-5,6,7,8-tetrahydrofolate-binding positions include leucine 128 and 132-134 (GHL). Residue lysine 237 is modified to N6-(pyridoxal phosphate)lysine.

It belongs to the SHMT family. In terms of assembly, homodimer. The cofactor is pyridoxal 5'-phosphate.

Its subcellular location is the cytoplasm. The catalysed reaction is (6R)-5,10-methylene-5,6,7,8-tetrahydrofolate + glycine + H2O = (6S)-5,6,7,8-tetrahydrofolate + L-serine. It functions in the pathway one-carbon metabolism; tetrahydrofolate interconversion. Its pathway is amino-acid biosynthesis; glycine biosynthesis; glycine from L-serine: step 1/1. Catalyzes the reversible interconversion of serine and glycine with tetrahydrofolate (THF) serving as the one-carbon carrier. This reaction serves as the major source of one-carbon groups required for the biosynthesis of purines, thymidylate, methionine, and other important biomolecules. Also exhibits THF-independent aldolase activity toward beta-hydroxyamino acids, producing glycine and aldehydes, via a retro-aldol mechanism. The polypeptide is Serine hydroxymethyltransferase (Ruegeria sp. (strain TM1040) (Silicibacter sp.)).